Reading from the N-terminus, the 585-residue chain is Cytochrome c lysine N-methyltransferase 1 (585 aa).

The 256-residue stretch at 18-273 folds into the SET domain; it reads KSLSLKPSTI…KPIEVFISYS (256 aa). The interval 186 to 288 is SET-like; sequence LNLSDIKHLY…FSMLVTYGFT (103 aa).

This sequence belongs to the class V-like SAM-binding methyltransferase superfamily.

The protein resides in the cytoplasm. It localises to the cytosol. It catalyses the reaction L-lysyl-[cytochrome c] + S-adenosyl-L-methionine = N(6)-methyl-L-lysyl-[cytochrome c] + S-adenosyl-L-homocysteine + H(+). Methyltransferase which mediates trimethylation of 'Lys-78' of cytochrome c (CYC1). In Saccharomyces cerevisiae (strain ATCC 204508 / S288c) (Baker's yeast), this protein is Cytochrome c lysine N-methyltransferase 1 (CTM1).